The following is a 450-amino-acid chain: Putative cysteine--tRNA ligase 2 (450 aa).

The 'HIGH' region signature appears at 29–39; sequence ITPYKSTHLGH. Residues 270 to 274 carry the 'KMSKS' region motif; the sequence is KMSKS. ATP is bound at residue K273. The interval 372–392 is disordered; the sequence is PIHPKHSPQMRDYSEHGSAGQ.

This sequence belongs to the class-I aminoacyl-tRNA synthetase family. Monomer.

Its subcellular location is the cytoplasm. The enzyme catalyses tRNA(Cys) + L-cysteine + ATP = L-cysteinyl-tRNA(Cys) + AMP + diphosphate. The polypeptide is Putative cysteine--tRNA ligase 2 (cysS2) (Tropheryma whipplei (strain TW08/27) (Whipple's bacillus)).